Reading from the N-terminus, the 601-residue chain is Elongation factor 4 (601 aa).

A tr-type G domain is found at 7–189 (DTIRNFSIVA…AIVAKLPPPK (183 aa)). GTP-binding positions include 19–24 (DHGKST) and 136–139 (NKID).

Belongs to the TRAFAC class translation factor GTPase superfamily. Classic translation factor GTPase family. LepA subfamily.

It localises to the cell inner membrane. It catalyses the reaction GTP + H2O = GDP + phosphate + H(+). In terms of biological role, required for accurate and efficient protein synthesis under certain stress conditions. May act as a fidelity factor of the translation reaction, by catalyzing a one-codon backward translocation of tRNAs on improperly translocated ribosomes. Back-translocation proceeds from a post-translocation (POST) complex to a pre-translocation (PRE) complex, thus giving elongation factor G a second chance to translocate the tRNAs correctly. Binds to ribosomes in a GTP-dependent manner. This Methylobacterium sp. (strain 4-46) protein is Elongation factor 4.